The primary structure comprises 329 residues: Probable tyrosine--tRNA ligase, cytoplasmic (329 aa).

Tyrosine 35 lines the L-tyrosine pocket. A 'HIGH' region motif is present at residues 40–48 (TTGKPHIAY). Positions 162, 166, 169, and 184 each coordinate L-tyrosine. The short motif at 218-222 (KMSSS) is the 'KMSKS' region element.

This sequence belongs to the class-I aminoacyl-tRNA synthetase family. As to quaternary structure, homodimer.

Its subcellular location is the cytoplasm. The enzyme catalyses tRNA(Tyr) + L-tyrosine + ATP = L-tyrosyl-tRNA(Tyr) + AMP + diphosphate + H(+). This is Probable tyrosine--tRNA ligase, cytoplasmic from Vairimorpha ceranae (strain BRL01) (Microsporidian parasite).